The following is a 119-amino-acid chain: Virulence protein VsdF (119 aa).

Functionally, expressed but non-essential protein, involved in the virulence of Salmonellas. The protein is Virulence protein VsdF (vsdF) of Salmonella dublin.